A 453-amino-acid polypeptide reads, in one-letter code: Sodium/alanine symporter AgcS (453 aa).

Over 1–17 (MDFVSLVNTVNSFVWGP) the chain is Extracellular. Residues 18–32 (YMLVLLLGTGIFLTL) form a helical membrane-spanning segment. Topologically, residues 33-67 (RLGFMQIHTLPYALKLAFSKHQDETSEGDISHFQA) are cytoplasmic. A helical transmembrane segment spans residues 68–89 (LMTALAATIGTGNIAGVATAYV). Threonine 75 provides a ligand contact to D-alanine. Positions 75 and 79 each coordinate L-alanine. Asparagine 80 contacts D-alanine. Residues 90-92 (LGG) are Extracellular-facing. The chain crosses the membrane as a helical span at residues 93-111 (PGAIFWMWVTAFFGMATKY). Over 112 to 148 (AEAVLAIKYRTVDDNGEMAGGPMYFLEKGLPDHGLGK) the chain is Cytoplasmic. Residues 149–179 (ILGVAFAFFGAFAAFGIGNMVQTNSVADAVA) form a helical membrane-spanning segment. Glutamine 170 contributes to the D-alanine binding site. L-alanine is bound at residue glutamine 170. Residues 180 to 186 (SNFGVDP) lie on the Extracellular side of the membrane. Residues 187 to 202 (LITGFVLAIFTAAVIL) traverse the membrane as a helical segment. Residues 203 to 206 (GGIK) are Cytoplasmic-facing. Residues 207-233 (SIGKATGIIVPFMAVFYILAGLVILAM) traverse the membrane as a helical segment. Over 234–258 (NIGYIIPAFGTIFSSAFNFSAGFGA) the chain is Extracellular. A helical transmembrane segment spans residues 259–274 (LIGTAIMWGVKRGVFS). A D-alanine-binding site is contributed by 273-274 (FS). 273–276 (FSNE) contacts L-alanine. At 275–300 (NEAGLGSAPIAAAAAKTDHPGRQALV) the chain is on the cytoplasmic side. A helical membrane pass occupies residues 301-322 (SMTGTFLDTIVVCTITGLVLTI). Topologically, residues 323 to 350 (AGLKAFPGLTDLTGASLTAASFDALMPM) are extracellular. A helical transmembrane segment spans residues 351-378 (GGLIVTIGLVFFAYSTVLGWSYYGEKCF). The Cytoplasmic segment spans residues 379 to 386 (EYLIGTKG). The chain crosses the membrane as a helical span at residues 387–403 (IRLYRIAFVLVAFWGAT). At 404–408 (ASLPL) the chain is on the extracellular side. Residues 409–430 (VWNIADTLNGAMAIPNLIGLLL) traverse the membrane as a helical segment. Residues 431-453 (LSGVVVSETKAFNEIRKNEAKNA) lie on the Cytoplasmic side of the membrane.

This sequence belongs to the alanine or glycine:cation symporter (AGCS) (TC 2.A.25) family.

It is found in the cell membrane. It catalyses the reaction D-alanine(in) + Na(+)(in) = D-alanine(out) + Na(+)(out). It carries out the reaction L-alanine(in) + Na(+)(in) = L-alanine(out) + Na(+)(out). The catalysed reaction is glycine(in) + Na(+)(in) = glycine(out) + Na(+)(out). Functionally, catalyzes the sodium-dependent uptake of extracellular D-alanine and L-alanine. Can also transport glycine. Binds glycine and both enantiomers of alanine, while strictly excluding other amino acids. The polypeptide is Sodium/alanine symporter AgcS (Methanococcus maripaludis (strain DSM 14266 / JCM 13030 / NBRC 101832 / S2 / LL)).